A 386-amino-acid polypeptide reads, in one-letter code: Probable magnesium transporter NIPA5 (386 aa).

Over 1–18 the chain is Extracellular; it reads MVYSSGSWRDAYKGMSSD. Residues 19-39 traverse the membrane as a helical segment; sequence NVKGLVLALSSSIFIGASFIV. Residues 40–61 lie on the Cytoplasmic side of the membrane; the sequence is KKKGLKKAGASGLRAGSGGYSY. 2 helical membrane passes run 62–82 and 83–103; these read LLEPLWWIGMITMIVGEIANF and AAYAFAPAILVTPLGALSIII. The Cytoplasmic portion of the chain corresponds to 104 to 115; it reads SASLAHIILQEK. Residues 116 to 136 form a helical membrane-spanning segment; the sequence is LHTFGILGCALCIVGSVTIVL. Residues 137–157 are Extracellular-facing; it reads HAPQEQDIVSVLEVWNLATEP. Residues 158-178 traverse the membrane as a helical segment; that stretch reads AFLFYAAAVVGAAIVLIVQFI. At 179 to 189 the chain is on the cytoplasmic side; sequence PLYGQSHVMVY. A helical membrane pass occupies residues 190-210; that stretch reads IGVCSLIGSLSVMSVKALGIA. Residues 211–220 are Extracellular-facing; the sequence is LKLTFSGTNQ. A helical membrane pass occupies residues 221-241; that stretch reads LGYPQTWVFTVIVLFCVITQM. Residues 242-255 lie on the Cytoplasmic side of the membrane; sequence NYLNKALDTFNTAV. The chain crosses the membrane as a helical span at residues 256–276; sequence VSPIYYVMFTSLTILASVIMF. Over 277–283 the chain is Extracellular; that stretch reads KDWDRQS. The helical transmembrane segment at 284 to 304 threads the bilayer; sequence GTQIMTELCGFVTILSGTFLL. At 305–386 the chain is on the cytoplasmic side; it reads HTTTDMVDGE…LRRQESSLRS (82 aa). The tract at residues 352–386 is disordered; the sequence is RQESAKSPRPARQNKQLEDDLEAVPLRRQESSLRS. Basic and acidic residues predominate over residues 376–386; the sequence is PLRRQESSLRS.

This sequence belongs to the NIPA (TC 2.A.7) family. As to quaternary structure, homodimer.

It is found in the cell membrane. It localises to the early endosome. Functionally, acts as a Mg(2+) transporter. Can also transport other divalent cations such as Fe(2+), Sr(2+), Ba(2+), Mn(2+) and Co(2+) but to a much less extent than Mg(2+). The sequence is that of Probable magnesium transporter NIPA5 from Arabidopsis thaliana (Mouse-ear cress).